Reading from the N-terminus, the 316-residue chain is UDP-N-acetylenolpyruvoylglucosamine reductase (316 aa).

An FAD-binding PCMH-type domain is found at 30-194 (VGGEADYLVF…LSVKFALAPG (165 aa)). R173 is an active-site residue. S223 functions as the Proton donor in the catalytic mechanism. The active site involves E293.

The protein belongs to the MurB family. FAD serves as cofactor.

It localises to the cytoplasm. The enzyme catalyses UDP-N-acetyl-alpha-D-muramate + NADP(+) = UDP-N-acetyl-3-O-(1-carboxyvinyl)-alpha-D-glucosamine + NADPH + H(+). The protein operates within cell wall biogenesis; peptidoglycan biosynthesis. Functionally, cell wall formation. In Streptococcus pneumoniae serotype 2 (strain D39 / NCTC 7466), this protein is UDP-N-acetylenolpyruvoylglucosamine reductase.